A 71-amino-acid chain; its full sequence is Palustrin-2AJ2 (71 aa).

An N-terminal signal peptide occupies residues 1–22 (MFTLKKPLLVLLFLGTVSLSLC). A propeptide spanning residues 23 to 40 (EQERAADDDEGEVIEEEV) is cleaved from the precursor. An intrachain disulfide couples Cys-65 to Cys-71.

As to expression, expressed by the skin glands.

The protein resides in the secreted. Displays broad-spectrum antibacterial activity against a range of Gram-positive and Gram-negative bacteria. Has low hemolytic activity, low cytotoxicity and low antioxidant activity. In Amolops jingdongensis (Chinese torrent frog), this protein is Palustrin-2AJ2.